The primary structure comprises 164 residues: UPF0114 protein YqhA (164 aa).

A run of 3 helical transmembrane segments spans residues Leu15–Phe35, Leu53–Val73, and Leu136–Leu156.

This sequence belongs to the UPF0114 family.

Its subcellular location is the cell membrane. This is UPF0114 protein YqhA from Escherichia coli O139:H28 (strain E24377A / ETEC).